Consider the following 838-residue polypeptide: pre-rRNA 2'-O-ribose RNA methyltransferase FTSJ3 (838 aa).

5 residues coordinate S-adenosyl-L-methionine: Gly56, Trp58, Asp76, Asp92, and Asp117. Lys157 (proton acceptor) is an active-site residue. Residues 332-367 (ISLSSEEEEEGDEEEAVAETKQAPEEEEEREEEQLN) form a disordered region. Phosphoserine is present on residues Ser333, Ser335, and Ser336. Over residues 336 to 348 (SEEEEEGDEEEAV) the composition is skewed to acidic residues. Citrulline is present on Arg390. Positions 453-482 (IYVSDAEDDDDTSLESDLDPEELAGVRTHS) are disordered. Acidic residues predominate over residues 457-474 (DAEDDDDTSLESDLDPEE). Ser532 and Ser545 each carry phosphoserine. A disordered region spans residues 537 to 639 (DADEALEISQ…GRGSKADEDG (103 aa)). A Glycyl lysine isopeptide (Lys-Gly) (interchain with G-Cter in SUMO2) cross-link involves residue Lys571. Ser576 bears the Phosphoserine mark. Glycyl lysine isopeptide (Lys-Gly) (interchain with G-Cter in SUMO2) cross-links involve residues Lys634 and Lys650. Residue Ser667 is modified to Phosphoserine. Residue Lys669 forms a Glycyl lysine isopeptide (Lys-Gly) (interchain with G-Cter in SUMO2) linkage. The residue at position 679 (Ser679) is a Phosphoserine. Residue Lys701 forms a Glycyl lysine isopeptide (Lys-Gly) (interchain with G-Cter in SUMO2) linkage. A coiled-coil region spans residues 730–768 (IKKVAEAKARKKRRVLKKLEQTKKKAEAVVNTVDISERE). Arg774 carries the post-translational modification Citrulline. The segment covering 802–812 (VRRPAGVKGHF) has biased composition (basic residues). Residues 802 to 838 (VRRPAGVKGHFKVVDSRMKKDQRAQQRKEQKKKHKRK) form a disordered region. A compositionally biased stretch (basic and acidic residues) spans 813–829 (KVVDSRMKKDQRAQQRK).

It belongs to the class I-like SAM-binding methyltransferase superfamily. RNA methyltransferase RlmE family. SPB1 subfamily. As to quaternary structure, interacts with NIP7. Post-translationally, citrullinated by PADI4.

The protein localises to the nucleus. The protein resides in the nucleolus. The enzyme catalyses a ribonucleotide in rRNA + S-adenosyl-L-methionine = a 2'-O-methylribonucleotide in rRNA + S-adenosyl-L-homocysteine + H(+). In terms of biological role, RNA 2'-O-methyltransferase involved in the processing of the 34S pre-rRNA to 18S rRNA and in 40S ribosomal subunit formation. The sequence is that of pre-rRNA 2'-O-ribose RNA methyltransferase FTSJ3 (Ftsj3) from Mus musculus (Mouse).